We begin with the raw amino-acid sequence, 882 residues long: DNA mismatch repair protein MutS (882 aa).

640–647 (GPNMGGKS) provides a ligand contact to ATP.

Belongs to the DNA mismatch repair MutS family.

Functionally, this protein is involved in the repair of mismatches in DNA. It is possible that it carries out the mismatch recognition step. This protein has a weak ATPase activity. The sequence is that of DNA mismatch repair protein MutS from Albidiferax ferrireducens (strain ATCC BAA-621 / DSM 15236 / T118) (Rhodoferax ferrireducens).